Consider the following 519-residue polypeptide: Cysteine--tRNA ligase (519 aa).

A Zn(2+)-binding site is contributed by Cys30. A 'HIGH' region motif is present at residues 32-42 (PTVYDRAHLGN). Residues Cys221, His253, and Glu257 each contribute to the Zn(2+) site. Residues 286-290 (KMSKS) carry the 'KMSKS' region motif. Lys289 is a binding site for ATP.

Belongs to the class-I aminoacyl-tRNA synthetase family. In terms of assembly, monomer. The cofactor is Zn(2+).

It localises to the cytoplasm. It catalyses the reaction tRNA(Cys) + L-cysteine + ATP = L-cysteinyl-tRNA(Cys) + AMP + diphosphate. This chain is Cysteine--tRNA ligase, found in Cereibacter sphaeroides (strain KD131 / KCTC 12085) (Rhodobacter sphaeroides).